A 151-amino-acid chain; its full sequence is Chromophore lyase CpcS/CpeS homolog (151 aa).

This sequence belongs to the CpcS/CpeS biliprotein lyase family.

The protein localises to the plastid. The protein resides in the chloroplast. Might function to covalently attach a chromophore to Cys residue(s) of phycobiliproteins. This is Chromophore lyase CpcS/CpeS homolog from Gracilaria tenuistipitata var. liui (Red alga).